Consider the following 252-residue polypeptide: PF03932 family protein CutC (252 aa).

The protein belongs to the CutC family.

It is found in the cytoplasm. The polypeptide is PF03932 family protein CutC (Serratia proteamaculans (strain 568)).